The primary structure comprises 1190 residues: Pumilio homolog 1 (1190 aa).

4 disordered regions span residues 38–74 (LTSG…GVAG), 491–531 (SNSA…QQTD), 611–675 (ANGP…NSSL), and 744–777 (GPVG…LNLG). Composition is skewed to low complexity over residues 491–508 (SNSA…GQQQ), 518–531 (PLTP…QQTD), 628–675 (QQPQ…NSSL), and 765–777 (LSSH…LNLG). One can recognise a PUM-HD domain in the interval 830–1172 (GRSRLLEDFR…HILAKLEKYY (343 aa)). Pumilio repeat units follow at residues 850–885 (EIAG…LVFN), 886–921 (EILQ…ALAE), 922–959 (RIRG…EMVR), 960–995 (ELDG…FIID), 996–1031 (AFKS…PILE), 1032–1067 (ELHQ…KIVA), 1068–1103 (EIRG…MLID), and 1107–1146 (TMND…IVMH). Residues 865–869 (SRFIQ) are adenine-nucleotide binding in RNA target. Residues 901–905 (NYVIQ) are uracil-nucleotide binding in RNA target. The interval 937-941 (CRVIQ) is adenine-nucleotide binding in RNA target. The tract at residues 975 to 979 (NHVVQ) is non-specific-nucleotide binding in RNA target. The tract at residues 1011 to 1015 (CRVIQ) is adenine-nucleotide binding in RNA target. The tract at residues 1047–1051 (NYVIQ) is uracil-nucleotide binding in RNA target. The guanine-nucleotide binding in RNA target stretch occupies residues 1083–1087 (SNVVE). A uracil-nucleotide binding in RNA target region spans residues 1126-1130 (NYVVQ).

As to quaternary structure, interacts with cpeb1-a; interacts with unphosphorylated cpeb1-a but not phosphorylated. Component of a complex with papd4, sympk, tacc3, parn, dazl and cpeb1. Post-translationally, phosphorylated. Phosphorylation takes place at the time of dissociation of cpeb1-a from pum1 and the translational activation of ccnb1 mRNA. Present in oocytes (at protein level).

The protein localises to the cytoplasm. It localises to the P-body. Its subcellular location is the cytoplasmic granule. In terms of biological role, sequence-specific RNA-binding protein that acts as a post-transcriptional repressor by binding the 3'-UTR of mRNA targets. Binds to an RNA consensus sequence, the Pumilio Response Element (PRE), 5'-UGUANAUA-3', that is related to the Nanos Response Element (NRE). Mediates post-transcriptional repression of transcripts via different mechanisms: acts via direct recruitment of deadenylase complexes leading to translational inhibition and mRNA degradation. Also mediates deadenylation-independent repression by promoting accessibility of miRNAs. Acts as a post-transcriptional repressor of ccnb1 mRNA during oocyte maturation. The polypeptide is Pumilio homolog 1 (Xenopus laevis (African clawed frog)).